We begin with the raw amino-acid sequence, 141 residues long: Putative pre-16S rRNA nuclease (141 aa).

Belongs to the YqgF nuclease family.

It is found in the cytoplasm. Its function is as follows. Could be a nuclease involved in processing of the 5'-end of pre-16S rRNA. The polypeptide is Putative pre-16S rRNA nuclease (Acetivibrio thermocellus (strain ATCC 27405 / DSM 1237 / JCM 9322 / NBRC 103400 / NCIMB 10682 / NRRL B-4536 / VPI 7372) (Clostridium thermocellum)).